The sequence spans 269 residues: Pertussis toxin subunit 1 homolog (269 aa).

The first 34 residues, 1–34, serve as a signal peptide directing secretion; it reads MRCTRAIRQTARTGWLTWLAILAVTAPVTSPAWA.

The protein belongs to the bacterial exotoxin subunit A family.

The chain is Pertussis toxin subunit 1 homolog (ptxA) from Bordetella bronchiseptica (strain ATCC BAA-588 / NCTC 13252 / RB50) (Alcaligenes bronchisepticus).